We begin with the raw amino-acid sequence, 235 residues long: Bypass of stop codon protein 2 (235 aa).

Residues 68–88 (FGIFQLMCSLGVIVLLLPIII) form a helical membrane-spanning segment. A Phosphoserine modification is found at Ser-177.

It is found in the lipid droplet. The protein localises to the membrane. This Saccharomyces cerevisiae (strain ATCC 204508 / S288c) (Baker's yeast) protein is Bypass of stop codon protein 2 (BSC2).